A 191-amino-acid polypeptide reads, in one-letter code: Probable GTP-binding protein EngB (191 aa).

In terms of domain architecture, EngB-type G spans 19–188 (NIPEICFMGR…HKKIFELFVE (170 aa)). Residues 27 to 34 (GRSNVGKS), 53 to 57 (GRTQL), 70 to 73 (DLPG), 136 to 139 (NKFD), and 167 to 169 (AST) each bind GTP. Mg(2+) is bound by residues Ser-34 and Thr-55.

This sequence belongs to the TRAFAC class TrmE-Era-EngA-EngB-Septin-like GTPase superfamily. EngB GTPase family. It depends on Mg(2+) as a cofactor.

In terms of biological role, necessary for normal cell division and for the maintenance of normal septation. The chain is Probable GTP-binding protein EngB from Mycoplasma genitalium (strain ATCC 33530 / DSM 19775 / NCTC 10195 / G37) (Mycoplasmoides genitalium).